We begin with the raw amino-acid sequence, 463 residues long: Heterogeneous nuclear ribonucleoprotein K (463 aa).

Position 1 is an N-acetylmethionine (Met-1). Positions 1-37 are disordered; that stretch reads METEQPEETFPNTETNGEFGKRPAEDMEEEQAFKRSR. The necessary for interaction with DDX1 stretch occupies residues 1–276; that stretch reads METEQPEETF…GRGGRPMPPS (276 aa). The segment covering 19 to 37 has biased composition (basic and acidic residues); that stretch reads FGKRPAEDMEEEQAFKRSR. At Lys-34 the chain carries N6-acetyllysine; alternate. Lys-34 is covalently cross-linked (Glycyl lysine isopeptide (Lys-Gly) (interchain with G-Cter in SUMO1); alternate). A Glycyl lysine isopeptide (Lys-Gly) (interchain with G-Cter in SUMO2); alternate cross-link involves residue Lys-34. Ser-36 is modified (phosphoserine). Phosphothreonine is present on Thr-39. The KH 1 domain maps to 42-104; the sequence is MVELRILLQS…ETIGEILKKI (63 aa). Residues Lys-52 and Lys-60 each participate in a glycyl lysine isopeptide (Lys-Gly) (interchain with G-Cter in SUMO2) cross-link. 2 consecutive repeat copies span residues 54–76 and 59–62. A 2 X 22 AA approximate repeats region spans residues 54–421; it reads AGAVIGKGGK…QIRHESGASI (368 aa). The 5 X 4 AA repeats of G-X-G-G stretch occupies residues 59–407; the sequence is GKGGKNIKAL…LAGSIIGKGG (349 aa). Residues Ser-75 and Ser-116 each carry the phosphoserine modification. The region spanning 144 to 209 is the KH 2 domain; sequence DCELRLLIHQ…DRVVECIKII (66 aa). Residue Lys-163 forms a Glycyl lysine isopeptide (Lys-Gly) (interchain with G-Cter in SUMO1); alternate linkage. Lys-163 is covalently cross-linked (Glycyl lysine isopeptide (Lys-Gly) (interchain with G-Cter in SUMO2); alternate). The residue at position 198 (Lys-198) is an N6-acetyllysine. Residues 209–337 are interaction with ZIK1; sequence ILDLISESPI…RPGDRYDGMV (129 aa). Residues Ser-214 and Ser-216 each carry the phosphoserine modification. Residue Lys-219 forms a Glycyl lysine isopeptide (Lys-Gly) (interchain with G-Cter in SUMO2); alternate linkage. Lys-219 carries the N6-succinyllysine; alternate modification. The RNA-binding RGG-box stretch occupies residues 236-273; it reads YGGFTMMFDDRRGRPVGFPMRGRGGFDRMPPGRGGRPM. A run of 3 repeats spans residues 245 to 250, 257 to 260, and 267 to 270. Residues 245-329 form a 2 X 6 AA repeats of D-R-R-G-R-P region; the sequence is DRRGRPVGFP…LMAYDRRGRP (85 aa). The segment at 250–329 is disordered; the sequence is PVGFPMRGRG…LMAYDRRGRP (80 aa). The span at 252–266 shows a compositional bias: low complexity; that stretch reads GFPMRGRGGFDRMPP. Over residues 276–285 the composition is skewed to basic and acidic residues; sequence SRRDYDDMSP. Ser-284 carries the phosphoserine modification. The stretch at 295–298 is one 3-4 repeat; sequence GRGG. Arg-316 carries the omega-N-methylarginine modification. A 2-2 repeat occupies 324-329; the sequence is DRRGRP. Arg-377 bears the Omega-N-methylarginine mark. Position 379 is a phosphoserine (Ser-379). A Phosphotyrosine modification is found at Tyr-380. Residues 387 to 451 form the KH 3 domain; it reads IITTQVTIPK…DQIQNAQYLL (65 aa). Tandem repeats lie at residues 399 to 421 and 404 to 407. An N6-acetyllysine; alternate modification is found at Lys-405. Residue Lys-405 forms a Glycyl lysine isopeptide (Lys-Gly) (interchain with G-Cter in SUMO2); alternate linkage. A Phosphoserine modification is found at Ser-420. Lys-422 participates in a covalent cross-link: Glycyl lysine isopeptide (Lys-Gly) (interchain with G-Cter in SUMO1); alternate. Lys-422 participates in a covalent cross-link: Glycyl lysine isopeptide (Lys-Gly) (interchain with G-Cter in SUMO2); alternate. A Glycyl lysine isopeptide (Lys-Gly) (interchain with G-Cter in SUMO); alternate cross-link involves residue Lys-422.

In terms of assembly, identified in the spliceosome C complex. Interacts with ANKRD28, RBM42 and ZIK1. Interacts with DDX1. Interacts with MDM2; this interaction leads to ubiquitination and proteasomal degradation. Interacts with p53/TP53. Interacts with BRDT. Interacts with IVNS1ABP. Interacts with PPIA/CYPA. Part of a transcription inhibitory ribonucleoprotein complex composed at least of the circular RNA circZNF827, ZNF827 and HNRNPL. Sumoylated by CBX4. Sumoylation is increased upon DNA damage, such as that produced by doxorubicin, etoposide, UV light and camptothecin, due to enhanced CBX4 phosphorylation by HIPK2 under these conditions. Post-translationally, ubiquitinated by MDM2. Doxorubicin treatment does not affect monoubiquitination, but slightly decreases HNRNPK poly-ubiquitination. In terms of processing, O-glycosylated (O-GlcNAcylated), in a cell cycle-dependent manner.

The protein resides in the cytoplasm. The protein localises to the nucleus. It is found in the nucleoplasm. It localises to the cell projection. Its subcellular location is the podosome. Functionally, one of the major pre-mRNA-binding proteins. Binds tenaciously to poly(C) sequences. Likely to play a role in the nuclear metabolism of hnRNAs, particularly for pre-mRNAs that contain cytidine-rich sequences. Can also bind poly(C) single-stranded DNA. Plays an important role in p53/TP53 response to DNA damage, acting at the level of both transcription activation and repression. When sumoylated, acts as a transcriptional coactivator of p53/TP53, playing a role in p21/CDKN1A and 14-3-3 sigma/SFN induction. As far as transcription repression is concerned, acts by interacting with long intergenic RNA p21 (lincRNA-p21), a non-coding RNA induced by p53/TP53. This interaction is necessary for the induction of apoptosis, but not cell cycle arrest. As part of a ribonucleoprotein complex composed at least of ZNF827, HNRNPL and the circular RNA circZNF827 that nucleates the complex on chromatin, may negatively regulate the transcription of genes involved in neuronal differentiation. In Oryctolagus cuniculus (Rabbit), this protein is Heterogeneous nuclear ribonucleoprotein K (HNRNPK).